We begin with the raw amino-acid sequence, 635 residues long: 1-deoxy-D-xylulose-5-phosphate synthase (635 aa).

Thiamine diphosphate is bound by residues histidine 73 and 114–116 (SHA). Aspartate 146 serves as a coordination point for Mg(2+). Residues 147 to 148 (GA), asparagine 176, tyrosine 287, and glutamate 368 each bind thiamine diphosphate. Asparagine 176 serves as a coordination point for Mg(2+).

The protein belongs to the transketolase family. DXPS subfamily. In terms of assembly, homodimer. It depends on Mg(2+) as a cofactor. Thiamine diphosphate serves as cofactor.

It catalyses the reaction D-glyceraldehyde 3-phosphate + pyruvate + H(+) = 1-deoxy-D-xylulose 5-phosphate + CO2. It functions in the pathway metabolic intermediate biosynthesis; 1-deoxy-D-xylulose 5-phosphate biosynthesis; 1-deoxy-D-xylulose 5-phosphate from D-glyceraldehyde 3-phosphate and pyruvate: step 1/1. Its function is as follows. Catalyzes the acyloin condensation reaction between C atoms 2 and 3 of pyruvate and glyceraldehyde 3-phosphate to yield 1-deoxy-D-xylulose-5-phosphate (DXP). In Corynebacterium diphtheriae (strain ATCC 700971 / NCTC 13129 / Biotype gravis), this protein is 1-deoxy-D-xylulose-5-phosphate synthase.